The sequence spans 244 residues: Troponin I, cardiac muscle (244 aa).

A compositionally biased stretch (acidic residues) spans 1–25 (MSDEEEVTYEEEEEEYVEEEEEEVV). The tract at residues 1 to 67 (MSDEEEVTYE…PQVKRKPKIS (67 aa)) is disordered. At serine 2 the chain carries N-acetylserine. Serine 2 bears the Phosphoserine; by CK2 mark. Pro residues predominate over residues 27–42 (PEPPKPAPPPAAPPPL).

It belongs to the troponin I family. In terms of assembly, binds to actin and tropomyosin. As to expression, heart.

In terms of biological role, troponin I is the inhibitory subunit of troponin, the thin filament regulatory complex which confers calcium-sensitivity to striated muscle actomyosin ATPase activity. In Xenopus laevis (African clawed frog), this protein is Troponin I, cardiac muscle (tnni3).